The chain runs to 724 residues: Degenerin mec-10 (724 aa).

A compositionally biased stretch (polar residues) spans 1–15; sequence MNRNPRMSKFQPNPR. The tract at residues 1-22 is disordered; sequence MNRNPRMSKFQPNPRSRSRFQD. The Cytoplasmic segment spans residues 1 to 122; it reads MNRNPRMSKF…GQAPNSLYRA (122 aa). A helical membrane pass occupies residues 123–143; the sequence is AWVFLLLICAIQFINQAVAVI. The Extracellular segment spans residues 144 to 684; that stretch reads QKYQKMDKIT…FGGHLGLWSG (541 aa). The segment at 229–265 is disordered; the sequence is KRGAGEKGTFEPANSACECDEEDGSNECEERSTEKPS. Positions 246–255 are enriched in acidic residues; sequence ECDEEDGSNE. Over residues 256 to 265 the composition is skewed to basic and acidic residues; it reads CEERSTEKPS. N293, N369, N463, N605, and N624 each carry an N-linked (GlcNAc...) asparagine glycan. The helical transmembrane segment at 685–705 threads the bilayer; it reads VSVMTCCEFVCLAFELIYMAI. The Cytoplasmic segment spans residues 706 to 724; it reads AHHINQQRIRRRENAANEY.

This sequence belongs to the amiloride-sensitive sodium channel (TC 1.A.6) family. In terms of assembly, component of a non-voltage-gated amiloride-sensitive cation channel complex (also called the degenerin channel complex) composed of at least the mec-2, mec-4, mec-6 and mec-10 subunits; the complex mediates mechanotransduction in touch cells. Interacts with mec-4 and mec-6.

The protein resides in the cell membrane. In terms of biological role, subunit of an amiloride-sensitive cation channel (degenerin channel complex) permeable for sodium, potassium, lithium and N-methylglucamine, and required for mechanosensory transduction (touch sensitivity). Negatively regulates the turning step of male mating behavior. This chain is Degenerin mec-10, found in Caenorhabditis elegans.